A 668-amino-acid polypeptide reads, in one-letter code: Exoribonuclease 2 (668 aa).

An RNB domain is found at 193-521; it reads RIEMTHVPFV…INHRMLKAVI (329 aa). Positions 568–650 constitute an S1 motif domain; sequence QTCFTGEIFD…ENRSLVAKPT (83 aa).

The protein belongs to the RNR ribonuclease family. RNase II subfamily.

It localises to the cytoplasm. It carries out the reaction Exonucleolytic cleavage in the 3'- to 5'-direction to yield nucleoside 5'-phosphates.. Its function is as follows. Involved in mRNA degradation. Hydrolyzes single-stranded polyribonucleotides processively in the 3' to 5' direction. This is Exoribonuclease 2 from Vibrio parahaemolyticus serotype O3:K6 (strain RIMD 2210633).